A 199-amino-acid polypeptide reads, in one-letter code: MPAIPPKLILASSSRYRRELLSRLRLPFTAISPDVDETPQPGEAPADLALRLSVAKAMAVAATHPGSVVIGSDQVATVDGEPIGKPGGFERAREQLRRLSGRAVEFHSAMAVTDGVHTETADIVTLCRFRTLTDAAIDAYLRAEEPYDTAGSAKAESLGIALMDSIRSDDPTAIIGLPLIALTRMLGRFGLDPLTGHPA.

The active-site Proton acceptor is Asp73.

It belongs to the Maf family. YceF subfamily. The cofactor is a divalent metal cation.

Its subcellular location is the cytoplasm. The enzyme catalyses N(7)-methyl-GTP + H2O = N(7)-methyl-GMP + diphosphate + H(+). Functionally, nucleoside triphosphate pyrophosphatase that hydrolyzes 7-methyl-GTP (m(7)GTP). May have a dual role in cell division arrest and in preventing the incorporation of modified nucleotides into cellular nucleic acids. The protein is 7-methyl-GTP pyrophosphatase of Bordetella pertussis (strain Tohama I / ATCC BAA-589 / NCTC 13251).